The chain runs to 446 residues: Mitochondrial distribution and morphology protein 12 (446 aa).

Positions 1–446 constitute an SMP-LTD domain; sequence MSIDINWEAA…VYPSFWTFLV (446 aa). Over residues 75–85 the composition is skewed to acidic residues; the sequence is DNEIGDGEVSD. 3 disordered regions span residues 75-106, 126-145, and 188-283; these read DNEIGDGEVSDIQDRSPKPRPSSAGNERSAAD, PHDVPIPSKEDPLASRPIRS, and TPLS…RVRE. Residues 126 to 138 are compositionally biased toward basic and acidic residues; it reads PHDVPIPSKEDPL. Residues 233–246 are compositionally biased toward polar residues; the sequence is TGNSRPSTADTLDS. A compositionally biased stretch (basic and acidic residues) spans 260-274; the sequence is SSDDAHPNVLPRRDN.

The protein belongs to the MDM12 family. Component of the ER-mitochondria encounter structure (ERMES) or MDM complex, composed of MMM1, MDM10, MDM12 and MDM34. An MMM1 homodimer associates with one molecule of MDM12 on each side in a pairwise head-to-tail manner, and the SMP-LTD domains of MMM1 and MDM12 generate a continuous hydrophobic tunnel for phospholipid trafficking.

The protein localises to the mitochondrion outer membrane. It localises to the endoplasmic reticulum membrane. In terms of biological role, component of the ERMES/MDM complex, which serves as a molecular tether to connect the endoplasmic reticulum (ER) and mitochondria. Components of this complex are involved in the control of mitochondrial shape and protein biogenesis, and function in nonvesicular lipid trafficking between the ER and mitochondria. MDM12 is required for the interaction of the ER-resident membrane protein MMM1 and the outer mitochondrial membrane-resident beta-barrel protein MDM10. The MDM12-MMM1 subcomplex functions in the major beta-barrel assembly pathway that is responsible for biogenesis of all mitochondrial outer membrane beta-barrel proteins, and acts in a late step after the SAM complex. The MDM10-MDM12-MMM1 subcomplex further acts in the TOM40-specific pathway after the action of the MDM12-MMM1 complex. Essential for establishing and maintaining the structure of mitochondria and maintenance of mtDNA nucleoids. The sequence is that of Mitochondrial distribution and morphology protein 12 from Coccidioides immitis (strain RS) (Valley fever fungus).